The primary structure comprises 639 residues: tRNA-dihydrouridine(47) synthase [NAD(P)(+)]-like (639 aa).

2 stretches are compositionally biased toward polar residues: residues 1 to 19 (MAES…TVTQ) and 54 to 65 (QTCSELSGNDAE). Disordered stretches follow at residues 1 to 20 (MAES…VTQK) and 52 to 122 (DKQT…HSQF). Over residues 66 to 85 (NTVRAEDAAEPEAKRIKLDD) the composition is skewed to basic and acidic residues. Residues 103–119 (EKKRARGQNKSRPHMKH) are compositionally biased toward basic residues. 2 consecutive C3H1-type zinc fingers follow at residues 122–152 (FEEN…HDVA) and 160–190 (EDIR…HLGD). Residues 300-302 (PLT) and glutamine 354 each bind FMN. Catalysis depends on cysteine 385, which acts as the Proton donor. FMN-binding positions include lysine 424, histidine 454, 486–488 (NGD), and 509–510 (AR).

It belongs to the Dus family. Dus3 subfamily. FMN serves as cofactor.

It carries out the reaction 5,6-dihydrouridine(47) in tRNA + NAD(+) = uridine(47) in tRNA + NADH + H(+). The catalysed reaction is 5,6-dihydrouridine(47) in tRNA + NADP(+) = uridine(47) in tRNA + NADPH + H(+). It catalyses the reaction a 5,6-dihydrouridine in mRNA + NAD(+) = a uridine in mRNA + NADH + H(+). The enzyme catalyses a 5,6-dihydrouridine in mRNA + NADP(+) = a uridine in mRNA + NADPH + H(+). Functionally, catalyzes the synthesis of dihydrouridine, a modified base, in various RNAs, such as tRNAs, mRNAs and some long non-coding RNAs (lncRNAs). Mainly modifies the uridine in position 47 (U47) in the D-loop of most cytoplasmic tRNAs. Also able to mediate the formation of dihydrouridine in some mRNAs, thereby regulating their translation. The polypeptide is tRNA-dihydrouridine(47) synthase [NAD(P)(+)]-like (dus3l) (Xenopus tropicalis (Western clawed frog)).